A 417-amino-acid chain; its full sequence is Serine hydroxymethyltransferase 1 (417 aa).

Residues Leu-121 and 125 to 127 (GHL) each bind (6S)-5,6,7,8-tetrahydrofolate. N6-(pyridoxal phosphate)lysine is present on Lys-229. 354–356 (SPF) is a binding site for (6S)-5,6,7,8-tetrahydrofolate.

Belongs to the SHMT family. In terms of assembly, homodimer. Pyridoxal 5'-phosphate is required as a cofactor.

The protein localises to the cytoplasm. It catalyses the reaction (6R)-5,10-methylene-5,6,7,8-tetrahydrofolate + glycine + H2O = (6S)-5,6,7,8-tetrahydrofolate + L-serine. Its pathway is one-carbon metabolism; tetrahydrofolate interconversion. It functions in the pathway amino-acid biosynthesis; glycine biosynthesis; glycine from L-serine: step 1/1. In terms of biological role, catalyzes the reversible interconversion of serine and glycine with tetrahydrofolate (THF) serving as the one-carbon carrier. This reaction serves as the major source of one-carbon groups required for the biosynthesis of purines, thymidylate, methionine, and other important biomolecules. Also exhibits THF-independent aldolase activity toward beta-hydroxyamino acids, producing glycine and aldehydes, via a retro-aldol mechanism. The polypeptide is Serine hydroxymethyltransferase 1 (Pseudomonas fluorescens (strain ATCC BAA-477 / NRRL B-23932 / Pf-5)).